Reading from the N-terminus, the 257-residue chain is MTLAVRVIPCLDVDAGRVVKGVNFENLRDAGDPVELAAAYDAQGADELTFLDVTASTADRGTMLDVVSRTAEQVFIPLTVGGGVRTVEDVDRLLRAGADKVSVNTAAIARPELLRELSERFGSQCIVLSVDARTVPQGQPDTPSGWEVTTHGGKRGTGIDAVEWAVRGAELGVGEILLNSMDADGTKAGFDLPMIRAVRAAVHVPVIASGGAGAVEHFAPAVGAGADAVLAASVFHFGDMTIGDVKKSMREEGITVR.

Residues Asp12 and Asp131 contribute to the active site.

This sequence belongs to the HisA/HisF family. As to quaternary structure, heterodimer of HisH and HisF.

It localises to the cytoplasm. It catalyses the reaction 5-[(5-phospho-1-deoxy-D-ribulos-1-ylimino)methylamino]-1-(5-phospho-beta-D-ribosyl)imidazole-4-carboxamide + L-glutamine = D-erythro-1-(imidazol-4-yl)glycerol 3-phosphate + 5-amino-1-(5-phospho-beta-D-ribosyl)imidazole-4-carboxamide + L-glutamate + H(+). Its pathway is amino-acid biosynthesis; L-histidine biosynthesis; L-histidine from 5-phospho-alpha-D-ribose 1-diphosphate: step 5/9. Its function is as follows. IGPS catalyzes the conversion of PRFAR and glutamine to IGP, AICAR and glutamate. The HisF subunit catalyzes the cyclization activity that produces IGP and AICAR from PRFAR using the ammonia provided by the HisH subunit. In Rhodococcus jostii (strain RHA1), this protein is Imidazole glycerol phosphate synthase subunit HisF.